The primary structure comprises 198 residues: Armadillo repeat-containing protein 7 (198 aa).

ARM repeat units lie at residues 57-99 (QVLD…QAGG) and 100-140 (LPLI…TSLP). Position 169 is a phosphoserine (Ser169).

In terms of assembly, component of the minor spliceosome. Within this complex, interacts with RBM48.

Functionally, as a component of the minor spliceosome, involved in the splicing of U12-type introns in pre-mRNAs. This Mus musculus (Mouse) protein is Armadillo repeat-containing protein 7 (Armc7).